The chain runs to 195 residues: Cysteine/O-acetylserine efflux protein (195 aa).

Over Met1–Ser7 the chain is Periplasmic. A helical transmembrane segment spans residues Ala8–Leu28. The Cytoplasmic portion of the chain corresponds to Ser29–Met46. Residues Ser47–Ile67 form a helical membrane-spanning segment. Residues Asp68–Pro69 are Periplasmic-facing. Residues Ala70 to Ile90 traverse the membrane as a helical segment. Topologically, residues Ala91–Pro104 are cytoplasmic. A helical transmembrane segment spans residues Ile105–Val125. At Thr126–Trp141 the chain is on the periplasmic side. Residues Val142–Leu162 traverse the membrane as a helical segment. Topologically, residues Ala163–Arg176 are cytoplasmic. The chain crosses the membrane as a helical span at residues Gln177–Phe194. A topological domain (periplasmic) is located at residue Tyr195.

It belongs to the Rht family.

Its subcellular location is the cell inner membrane. It catalyses the reaction O-acetyl-L-serine(in) = O-acetyl-L-serine(out). The enzyme catalyses L-cysteine(in) = L-cysteine(out). Exporter of O-acetylserine (OAS) and cysteine. The sequence is that of Cysteine/O-acetylserine efflux protein (eamB) from Escherichia coli O139:H28 (strain E24377A / ETEC).